Reading from the N-terminus, the 59-residue chain is Large ribosomal subunit protein bL32 (59 aa).

The segment at 1–59 is disordered; that stretch reads MAVQQNKKSPSKRGMHRSHDFLTTAPIAVEPTTGEVHLRHHVSPNGYYRGRKVVKTKND. Positions 49-59 are enriched in basic residues; it reads RGRKVVKTKND.

The protein belongs to the bacterial ribosomal protein bL32 family.

This chain is Large ribosomal subunit protein bL32, found in Ralstonia pickettii (strain 12J).